We begin with the raw amino-acid sequence, 844 residues long: RNA-directed RNA polymerase (844 aa).

A GTP-binding site is contributed by 248–255 (GLPYIGKT). The region spanning 384–588 (MIYADNIYIL…ENERLIASVA (205 aa)) is the RdRp catalytic domain. Positions 820–844 (EFSEKIPLTPTQKKNAKRREKQRRN) are disordered. Basic residues predominate over residues 833–844 (KNAKRREKQRRN).

Interacts with VP3 in the cytoplasm. Exists in multiple phosphorylated forms.

The protein localises to the virion. It catalyses the reaction RNA(n) + a ribonucleoside 5'-triphosphate = RNA(n+1) + diphosphate. In terms of biological role, RNA-dependent RNA polymerase which is found both free and covalently attached to the genomic RNA. May also contain guanylyl and methyl transferase activities. The protein is RNA-directed RNA polymerase (VP1) of Infectious pancreatic necrosis virus (strain Sp) (IPNV).